A 467-amino-acid chain; its full sequence is Gustatory and odorant receptor 22 (467 aa).

The Cytoplasmic segment spans residues 1-106 (MIHTQMEDAQ…MPRTTFTWCS (106 aa)). The chain crosses the membrane as a helical span at residues 107 to 127 (KAFLWAYFIYACETVIVLVVA). At 128–144 (RERINKFISTSDKRFDE) the chain is on the extracellular side. A helical transmembrane segment spans residues 145–165 (VIYNIIFMSIMVPHFLLPVAS). The Cytoplasmic portion of the chain corresponds to 166–198 (WRNGSEVAKFKNMWTDFQYKYLIVTGKPIVFPK). Residues 199–219 (LYPITWTLCIVSWSLSLVIIL) form a helical membrane-spanning segment. Over 220 to 238 (SQYYLQPDFQFCHTFAYYH) the chain is Extracellular. Residues 239–259 (IIAMLNGFCSLWFVNCTAFGT) traverse the membrane as a helical segment. Over 260–304 (ASKAFAKELTDVLATERPAAKLTEYRHLWVDLSHMMQQLGKAYSN) the chain is Cytoplasmic. A helical membrane pass occupies residues 305–325 (MYGIYCLVIFFTTIIATYGSL). At 326-337 (SEIIEHGATYKE) the chain is on the extracellular side. A helical membrane pass occupies residues 338–358 (VGLFVIVFYCMSLLFIICNEA). Over 359–414 (HHASKRVGLNFQERLLNVNLTAVDKATQKEVEMFLVAIDKNPPTMNLDGYANINRG) the chain is Cytoplasmic. A helical membrane pass occupies residues 415–435 (LITSNISFMATYLVVLMQFKL). At 436–467 (TLLRQSAKNAFISALKANLSRIRSLDADKVNT) the chain is on the extracellular side. N-linked (GlcNAc...) asparagine glycosylation occurs at Asn453.

It belongs to the insect chemoreceptor superfamily. Gustatory receptor (GR) family. Gr21a subfamily. As to expression, carbon dioxide-responsive neurons coexpress GPRgr22 and GPRgr24 in the maxillary palp at both larval and adult life stages.

The protein resides in the cell membrane. Gustatory receptor which mediates acceptance or avoidance behavior, depending on its substrates. GPRgr22 and GPRgr24 together are sufficient for olfactory carbon dioxide-chemosensation. The sequence is that of Gustatory and odorant receptor 22 from Anopheles gambiae (African malaria mosquito).